A 500-amino-acid chain; its full sequence is Probable cytosol aminopeptidase (500 aa).

Mn(2+) is bound by residues lysine 268 and aspartate 273. Residue lysine 280 is part of the active site. Mn(2+) contacts are provided by aspartate 291, aspartate 350, and glutamate 352. Arginine 354 is a catalytic residue.

It belongs to the peptidase M17 family. It depends on Mn(2+) as a cofactor.

It localises to the cytoplasm. The enzyme catalyses Release of an N-terminal amino acid, Xaa-|-Yaa-, in which Xaa is preferably Leu, but may be other amino acids including Pro although not Arg or Lys, and Yaa may be Pro. Amino acid amides and methyl esters are also readily hydrolyzed, but rates on arylamides are exceedingly low.. It catalyses the reaction Release of an N-terminal amino acid, preferentially leucine, but not glutamic or aspartic acids.. Its function is as follows. Presumably involved in the processing and regular turnover of intracellular proteins. Catalyzes the removal of unsubstituted N-terminal amino acids from various peptides. This is Probable cytosol aminopeptidase from Baumannia cicadellinicola subsp. Homalodisca coagulata.